Consider the following 129-residue polypeptide: Histone H2A.2 (129 aa).

Lys-5 carries the N6-acetyllysine modification. Position 108 is an N5-methylglutamine (Gln-108).

Belongs to the histone H2A family. The nucleosome is a histone octamer containing two molecules each of H2A, H2B, H3 and H4 assembled in one H3-H4 heterotetramer and two H2A-H2B heterodimers. The octamer wraps approximately 147 bp of DNA. Post-translationally, acetylated by ESA1 to form H2AK4ac.

The protein resides in the nucleus. The protein localises to the chromosome. Core component of nucleosome which plays a central role in DNA double strand break (DSB) repair. Nucleosomes wrap and compact DNA into chromatin, limiting DNA accessibility to the cellular machineries which require DNA as a template. Histones thereby play a central role in transcription regulation, DNA repair, DNA replication and chromosomal stability. DNA accessibility is regulated via a complex set of post-translational modifications of histones, also called histone code, and nucleosome remodeling. This chain is Histone H2A.2 (HTA2), found in Lodderomyces elongisporus (strain ATCC 11503 / CBS 2605 / JCM 1781 / NBRC 1676 / NRRL YB-4239) (Yeast).